Here is a 203-residue protein sequence, read N- to C-terminus: Holliday junction branch migration complex subunit RuvA (203 aa).

The segment at 1–63 (MIGKLSGKID…EEHIHLYGFL (63 aa)) is domain I. Residues 64 to 142 (TIEEKNFFNL…KISTGAAIIN (79 aa)) are domain II. Positions 143–149 (DSLNIKN) are flexible linker. Residues 150–203 (ITSVASNEVIKALVNLGFSRFEAQNSVQGIVIQNPEISIDELIKTALKNRNAGL) are domain III.

Belongs to the RuvA family. As to quaternary structure, homotetramer. Forms an RuvA(8)-RuvB(12)-Holliday junction (HJ) complex. HJ DNA is sandwiched between 2 RuvA tetramers; dsDNA enters through RuvA and exits via RuvB. An RuvB hexamer assembles on each DNA strand where it exits the tetramer. Each RuvB hexamer is contacted by two RuvA subunits (via domain III) on 2 adjacent RuvB subunits; this complex drives branch migration. In the full resolvosome a probable DNA-RuvA(4)-RuvB(12)-RuvC(2) complex forms which resolves the HJ.

It is found in the cytoplasm. In terms of biological role, the RuvA-RuvB-RuvC complex processes Holliday junction (HJ) DNA during genetic recombination and DNA repair, while the RuvA-RuvB complex plays an important role in the rescue of blocked DNA replication forks via replication fork reversal (RFR). RuvA specifically binds to HJ cruciform DNA, conferring on it an open structure. The RuvB hexamer acts as an ATP-dependent pump, pulling dsDNA into and through the RuvAB complex. HJ branch migration allows RuvC to scan DNA until it finds its consensus sequence, where it cleaves and resolves the cruciform DNA. The protein is Holliday junction branch migration complex subunit RuvA of Rickettsia akari (strain Hartford).